Consider the following 232-residue polypeptide: MVSLEDAVIARLESHGERFEVLVDPDLAAEFRREDSDVSVEDVLAVQEVFRDARKGDKASEEAMRKVFETADPLEVTPVILRRGTIQLTAEQRRQMIEDKRLKIINKIAREAINPQNGLPHPPKRIEKAMEEARVHVDPFKTVDEQVNIVLKAIRTKIPIKFEKVRVAIKIPGERAGSAYGVISNFGKITNEEWQNDGSWIAVVEIPGGLQDSFYQKLSELTGGNVETRLIK.

The protein belongs to the SDO1/SBDS family.

The sequence is that of Ribosome maturation protein SDO1 homolog from Methanothermobacter thermautotrophicus (strain ATCC 29096 / DSM 1053 / JCM 10044 / NBRC 100330 / Delta H) (Methanobacterium thermoautotrophicum).